Consider the following 249-residue polypeptide: DNA polymerase sliding clamp (249 aa).

This sequence belongs to the PCNA family. In terms of assembly, homotrimer which circularizes head-to-tail (head is a N-terminus, tail is at C-terminus) to form a toroid. RFC opens the toroid so it can load on DNA. Interacts with both Pol I (pol) and Pol II (polB-polC), with Hel308 (hjm) and with Hjc. Interaction with the C-terminal PIP-box of RfcL may stabilize the toroidal structure.

Functionally, sliding clamp subunit that acts as a moving platform for DNA processing. Responsible for tethering the catalytic subunit of DNA polymerase to DNA during high-speed replication. Unlike its eukaryotic paralog, loads on circular DNA without the replication factor C (RFC) clamp loader, although RFC greatly increases loading efficiency. Stimulates the ATPase activity of replication factor C (RFC) in the presence of ssDNA. Stimulates the helicase activity of Hel308 and may alter its substrate specificity. The sequence is that of DNA polymerase sliding clamp from Pyrococcus furiosus (strain ATCC 43587 / DSM 3638 / JCM 8422 / Vc1).